A 316-amino-acid chain; its full sequence is CD276 antigen (316 aa).

The first 28 residues, 1–28 (MLRGWGGPSVGVSMGTALGVLCLCLTGA), serve as a signal peptide directing secretion. Residues 29–139 (VEVQVSEDPV…DSAAVSLQVA (111 aa)) enclose the Ig-like V-type domain. The Extracellular segment spans residues 29–248 (VEVQVSEDPV…GQPMTFPPEA (220 aa)). N-linked (GlcNAc...) asparagine glycosylation is found at Asn104, Asn189, and Asn215. An Ig-like C2-type domain is found at 145 to 238 (PSMTLEPNKD…QDAHGSVTIT (94 aa)). Cys165 and Cys220 are oxidised to a cystine. The chain crosses the membrane as a helical span at residues 249-269 (LWVTVGLSVCLVILLVALAFV). The Cytoplasmic segment spans residues 270-316 (CWRKIKQSCEEENAGAEDQDGDGEGSKTALRPLKHSENKEDDGQEIA). Acidic residues predominate over residues 281–292 (ENAGAEDQDGDG). Positions 281 to 316 (ENAGAEDQDGDGEGSKTALRPLKHSENKEDDGQEIA) are disordered.

The protein belongs to the immunoglobulin superfamily. BTN/MOG family. As to quaternary structure, interacts with TREML2 and this interaction enhances T-cell activation.

The protein resides in the membrane. Its function is as follows. Modulates T-cell-mediated immune responses and the development of acute and chronic transplant rejection. May play a positive regulatory role in bone formation and has a dual role in the bone-immune interface. Induces antitumor immunity as it activates both acquired and innate immunity leading to natural killer cell and CD8 T-cell dependent killing of tumor cells. The polypeptide is CD276 antigen (Cd276) (Rattus norvegicus (Rat)).